A 290-amino-acid polypeptide reads, in one-letter code: Porphobilinogen deaminase (290 aa).

Cysteine 237 carries the post-translational modification S-(dipyrrolylmethanemethyl)cysteine.

It belongs to the HMBS family. In terms of assembly, monomer. Dipyrromethane serves as cofactor.

The enzyme catalyses 4 porphobilinogen + H2O = hydroxymethylbilane + 4 NH4(+). Its pathway is porphyrin-containing compound metabolism; protoporphyrin-IX biosynthesis; coproporphyrinogen-III from 5-aminolevulinate: step 2/4. Its function is as follows. Tetrapolymerization of the monopyrrole PBG into the hydroxymethylbilane pre-uroporphyrinogen in several discrete steps. This is Porphobilinogen deaminase from Clostridium botulinum (strain ATCC 19397 / Type A).